The chain runs to 119 residues: MKRTFLSAKLHKVITTAVELDYEGSCEIDGVLLDAADIGAFEQIQIYNINNGNRFTTYTIRGKDNSGVISVNGAAAHKVNVGDMLIIAAYGVYSEKELESYTPRLCYVNDQNILTKISS.

Ser-25 serves as the catalytic Schiff-base intermediate with substrate; via pyruvic acid. Ser-25 is modified (pyruvic acid (Ser)). A substrate-binding site is contributed by Thr-57. Tyr-58 serves as the catalytic Proton donor. 73–75 (GAA) serves as a coordination point for substrate.

Belongs to the PanD family. As to quaternary structure, heterooctamer of four alpha and four beta subunits. Pyruvate serves as cofactor. Post-translationally, is synthesized initially as an inactive proenzyme, which is activated by self-cleavage at a specific serine bond to produce a beta-subunit with a hydroxyl group at its C-terminus and an alpha-subunit with a pyruvoyl group at its N-terminus.

The protein localises to the cytoplasm. It carries out the reaction L-aspartate + H(+) = beta-alanine + CO2. It participates in cofactor biosynthesis; (R)-pantothenate biosynthesis; beta-alanine from L-aspartate: step 1/1. Functionally, catalyzes the pyruvoyl-dependent decarboxylation of aspartate to produce beta-alanine. This is Aspartate 1-decarboxylase from Ruthia magnifica subsp. Calyptogena magnifica.